Consider the following 499-residue polypeptide: Serine/threonine-protein phosphatase 5 (499 aa).

The segment at 1–23 is disordered; the sequence is MAMAEGERTECAEPPRDEPPAEG. Position 2 is an N-acetylalanine (alanine 2). TPR repeat units lie at residues 28 to 61, 62 to 95, and 96 to 129; these read AEELKTQANDYFKAKDYENAIKFYSQAIELNPSN, AIYYGNRSLAYLRTECYGYALGDATRAIELDKKY, and IKGYYRRAASNMALGKFRAALRDYETVVKVKPND. Positions 200–499 are catalytic; the sequence is DQKKLHRKCA…ANTLLQLGMM (300 aa). Residues aspartate 242, histidine 244, and aspartate 271 each contribute to the Mg(2+) site. Residue histidine 244 participates in substrate binding. Substrate contacts are provided by residues arginine 275 and 303 to 304; that span reads NH. Asparagine 303 lines the Mg(2+) pocket. The active-site Proton donor/acceptor is histidine 304. Residue histidine 352 coordinates Mg(2+). 2 residues coordinate substrate: arginine 400 and histidine 427. Histidine 427 provides a ligand contact to Mg(2+). The tract at residues 495–499 is required for autoinhibition; sequence QLGMM.

This sequence belongs to the PPP phosphatase family. PP-5 (PP-T) subfamily. Probably forms a complex composed of chaperones HSP90 and HSP70, co-chaperones STIP1/HOP, CDC37, PPP5C, PTGES3/p23, TSC1 and client protein TSC2. Probably forms a complex composed of chaperones HSP90 and HSP70, co-chaperones CDC37, PPP5C, TSC1 and client protein TSC2, CDK4, AKT, RAF1 and NR3C1; this complex does not contain co-chaperones STIP1/HOP and PTGES3/p23. Part of a complex with HSP90/HSP90AA1 and steroid receptors. Interacts (via TPR repeats) with HSP90AA1 (via TPR repeat-binding motif) or HSPA1A/HSPA1B; the interaction is direct and activates the phosphatase activity. Dissociates from HSPA1A/HSPA1B and HSP90AA1 in response to arachidonic acid. Interacts with CPNE1 (via VWFA domain). Interacts with CDC16, CDC27. Interacts with KLHDC10 (via the 6 Kelch repeats); inhibits the phosphatase activity on MAP3K5. Interacts with ATM and ATR; both interactions are induced by DNA damage and enhance ATM and ATR kinase activity. Interacts with RAD17; reduced by DNA damage. Interacts with nuclear receptors such as NR3C1/GCR and PPARG (activated by agonist); regulates their transactivation activities. Interacts (via TPR repeats) with S100 proteins S100A1, S100A2, S100A6, S100B and S100P; the interactions are calcium-dependent, strongly activate PPP5C phosphatase activity and compete with HSP90AA1 and MAP3K5 interactions. Interacts with SMAD2 and SMAD3 but not with SMAD1; decreases SMAD3 phosphorylation and protein levels. Interacts (via TPR repeats) with CRY1 and CRY2; the interaction with CRY2 down-regulates the phosphatase activity on CSNK1E. Interacts (via TPR repeats) with the active form of RAC1, GNA12 or GNA13; these interactions activate the phosphatase activity and translocate PPP5C to the cell membrane. Interacts with FLCN. The cofactor is Mg(2+). Mn(2+) is required as a cofactor. In terms of processing, activated by at least two different proteolytic cleavages producing a 56 kDa and a 50 kDa form. Predominantly found in brain and, in lower levels, in testis, but was nearly undetectable in spleen, lung, skeletal muscle, kidney and liver.

Its subcellular location is the nucleus. It is found in the cytoplasm. The protein localises to the cell membrane. The catalysed reaction is O-phospho-L-seryl-[protein] + H2O = L-seryl-[protein] + phosphate. The enzyme catalyses O-phospho-L-threonyl-[protein] + H2O = L-threonyl-[protein] + phosphate. With respect to regulation, autoinhibited. In the autoinhibited state, the TPR domain interacts with the catalytic region and prevents substrate access to the catalytic pocket. Allosterically activated by various polyunsaturated fatty acids, free long-chain fatty-acids and long-chain fatty acyl-CoA esters, arachidonic acid being the most effective activator. HSP90A and probably RAC1, GNA12 and GNA13 can also release the autoinhibition by the TPR repeat. Activation by RAC1, GNA12 and GNA13 is synergistic with the one produced by fatty acids binding. Inhibited by okadaic acid. In terms of biological role, serine/threonine-protein phosphatase that dephosphorylates a myriad of proteins involved in different signaling pathways including the kinases CSNK1E, ASK1/MAP3K5, PRKDC and RAF1, the nuclear receptors NR3C1, PPARG, ESR1 and ESR2, SMAD proteins and TAU/MAPT. Implicated in wide ranging cellular processes, including apoptosis, differentiation, DNA damage response, cell survival, regulation of ion channels or circadian rhythms, in response to steroid and thyroid hormones, calcium, fatty acids, TGF-beta as well as oxidative and genotoxic stresses. Participates in the control of DNA damage response mechanisms such as checkpoint activation and DNA damage repair through, for instance, the regulation ATM/ATR-signaling and dephosphorylation of PRKDC and TP53BP1. Inhibits ASK1/MAP3K5-mediated apoptosis induced by oxidative stress. Plays a positive role in adipogenesis, mainly through the dephosphorylation and activation of PPARG transactivation function. Also dephosphorylates and inhibits the anti-adipogenic effect of NR3C1. Regulates the circadian rhythms, through the dephosphorylation and activation of CSNK1E. May modulate TGF-beta signaling pathway by the regulation of SMAD3 phosphorylation and protein expression levels. Dephosphorylates and may play a role in the regulation of TAU/MAPT. Through their dephosphorylation, may play a role in the regulation of ions channels such as KCNH2. Dephosphorylate FNIP1, disrupting interaction with HSP90AA1/Hsp90. The polypeptide is Serine/threonine-protein phosphatase 5 (Ppp5c) (Rattus norvegicus (Rat)).